Reading from the N-terminus, the 255-residue chain is 5-oxoprolinase subunit A 1 (255 aa).

Belongs to the LamB/PxpA family. As to quaternary structure, forms a complex composed of PxpA, PxpB and PxpC.

It carries out the reaction 5-oxo-L-proline + ATP + 2 H2O = L-glutamate + ADP + phosphate + H(+). Functionally, catalyzes the cleavage of 5-oxoproline to form L-glutamate coupled to the hydrolysis of ATP to ADP and inorganic phosphate. In Agrobacterium fabrum (strain C58 / ATCC 33970) (Agrobacterium tumefaciens (strain C58)), this protein is 5-oxoprolinase subunit A 1.